Here is a 633-residue protein sequence, read N- to C-terminus: Guanylate-binding protein 6 (633 aa).

The segment at 1 to 310 is GTPase domain (Globular); it reads MESGPKMLAP…EAINSGAVPC (310 aa). One can recognise a GB1/RHD3-type G domain in the interval 35 to 277; it reads SQPVVVVAIV…FCSYIFTHAR (243 aa). Residues 45–52, 67–69, and 97–101 each bind GTP; these read GLYRTGKS, LGS, and DTEGL.

Belongs to the TRAFAC class dynamin-like GTPase superfamily. GB1/RHD3 GTPase family. GB1 subfamily. In terms of processing, (Microbial infection) Ubiquitinated by S.flexneri IpaH9.8, leading to its degradation by the proteasome, thereby preventing its ability to promote host defense against bacterial infection.

The protein resides in the cytoplasmic vesicle. The enzyme catalyses GTP + H2O = GDP + phosphate + H(+). Interferon (IFN)-inducible GTPase that plays important roles in innate immunity against a diverse range of bacterial, viral and protozoan pathogens, such as bacterial pathogens Listeria monocytogenes and Mycobacterium bovis BCG as well as the protozoan pathogen Toxoplasma gondii. Confers protection to several pathogens, including the bacterial pathogens Listeria monocytogenes and Mycobacterium bovis BCG as well as the protozoan pathogen Toxoplasma gondii. This is Guanylate-binding protein 6 (GBP6) from Homo sapiens (Human).